A 221-amino-acid chain; its full sequence is Peroxiredoxin 2 (221 aa).

The Thioredoxin domain maps to 15–170 (PQIGAPAPDF…IIRIIDALQT (156 aa)). Cys-56 (cysteine sulfenic acid (-SOH) intermediate) is an active-site residue. Residue Arg-133 coordinates substrate. Cys-211 and Cys-217 are joined by a disulfide.

This sequence belongs to the peroxiredoxin family. Prx6 subfamily. Homodecamer. Pentamer of dimers that assemble into a ring structure.

Its subcellular location is the cytoplasm. It catalyses the reaction a hydroperoxide + [thioredoxin]-dithiol = an alcohol + [thioredoxin]-disulfide + H2O. Thiol-specific peroxidase that catalyzes the reduction of hydrogen peroxide and organic hydroperoxides to water and alcohols, respectively. Plays a role in cell protection against oxidative stress by detoxifying peroxides. This is Peroxiredoxin 2 from Caldanaerobacter subterraneus subsp. tengcongensis (strain DSM 15242 / JCM 11007 / NBRC 100824 / MB4) (Thermoanaerobacter tengcongensis).